A 280-amino-acid chain; its full sequence is MQNHVISLASAAERRAHIAATFGVRGIPFQFFDALMPSEELNRMMAELVPGLAKQHLLSEVEKACFMSHAVLWKQALDEGLPYVAVFEDDVLLGKDAEKFLAEDTWLEERFDKDSAFIVRLETMFAKVIVRPDKVLNYENRSFPLLESEHWGTAGYIISREAMRFFLERFAVLPAEWIKAVDWMMFTYFFDKEGMPVYQVNPALCTQELHYAKFLSKNSMLGSDLEKDREQERRHRRSLKVMFDLKRALGKFGREKKKRMERQRQAELEKAYGRRVISFK.

Belongs to the glycosyltransferase 25 family.

Its pathway is glycan metabolism; lacto-N-neotetraose biosynthesis. It functions in the pathway bacterial outer membrane biogenesis; lipooligosaccharide biosynthesis. Adds the first galactose to the lacto-N-tetraose chain in lipooligosaccharide (LOS). In Neisseria meningitidis serogroup B (strain ATCC BAA-335 / MC58), this protein is Lacto-N-neotetraose biosynthesis glycosyltransferase LgtE (lgtE).